A 333-amino-acid chain; its full sequence is Phosphate acyltransferase (333 aa).

This sequence belongs to the PlsX family. As to quaternary structure, homodimer. Probably interacts with PlsY.

The protein localises to the cytoplasm. The catalysed reaction is a fatty acyl-[ACP] + phosphate = an acyl phosphate + holo-[ACP]. It functions in the pathway lipid metabolism; phospholipid metabolism. In terms of biological role, catalyzes the reversible formation of acyl-phosphate (acyl-PO(4)) from acyl-[acyl-carrier-protein] (acyl-ACP). This enzyme utilizes acyl-ACP as fatty acyl donor, but not acyl-CoA. In Pelagibacter ubique (strain HTCC1062), this protein is Phosphate acyltransferase.